The primary structure comprises 495 residues: Bifunctional protein GlmU (495 aa).

The pyrophosphorylase stretch occupies residues methionine 1–arginine 241. UDP-N-acetyl-alpha-D-glucosamine-binding positions include leucine 10–glycine 13, lysine 24, glutamine 81, and glycine 86–threonine 87. Residue aspartate 112 coordinates Mg(2+). Glycine 151, glutamate 166, asparagine 181, and asparagine 239 together coordinate UDP-N-acetyl-alpha-D-glucosamine. Asparagine 239 provides a ligand contact to Mg(2+). The interval valine 242–alanine 262 is linker. The N-acetyltransferase stretch occupies residues glycine 263–glutamine 495. Positions 344 and 362 each coordinate UDP-N-acetyl-alpha-D-glucosamine. Histidine 374 serves as the catalytic Proton acceptor. UDP-N-acetyl-alpha-D-glucosamine is bound by residues tyrosine 377 and asparagine 388. Acetyl-CoA-binding positions include alanine 391, asparagine 397 to tyrosine 398, serine 416, and alanine 434. The interval glycine 467 to glutamine 495 is disordered. Over residues threonine 468–alanine 479 the composition is skewed to low complexity. The segment covering alanine 480–glutamine 495 has biased composition (basic and acidic residues).

This sequence in the N-terminal section; belongs to the N-acetylglucosamine-1-phosphate uridyltransferase family. The protein in the C-terminal section; belongs to the transferase hexapeptide repeat family. As to quaternary structure, homotrimer. Requires Mg(2+) as cofactor.

It is found in the cytoplasm. It catalyses the reaction alpha-D-glucosamine 1-phosphate + acetyl-CoA = N-acetyl-alpha-D-glucosamine 1-phosphate + CoA + H(+). The enzyme catalyses N-acetyl-alpha-D-glucosamine 1-phosphate + UTP + H(+) = UDP-N-acetyl-alpha-D-glucosamine + diphosphate. It functions in the pathway nucleotide-sugar biosynthesis; UDP-N-acetyl-alpha-D-glucosamine biosynthesis; N-acetyl-alpha-D-glucosamine 1-phosphate from alpha-D-glucosamine 6-phosphate (route II): step 2/2. It participates in nucleotide-sugar biosynthesis; UDP-N-acetyl-alpha-D-glucosamine biosynthesis; UDP-N-acetyl-alpha-D-glucosamine from N-acetyl-alpha-D-glucosamine 1-phosphate: step 1/1. The protein operates within bacterial outer membrane biogenesis; LPS lipid A biosynthesis. In terms of biological role, catalyzes the last two sequential reactions in the de novo biosynthetic pathway for UDP-N-acetylglucosamine (UDP-GlcNAc). The C-terminal domain catalyzes the transfer of acetyl group from acetyl coenzyme A to glucosamine-1-phosphate (GlcN-1-P) to produce N-acetylglucosamine-1-phosphate (GlcNAc-1-P), which is converted into UDP-GlcNAc by the transfer of uridine 5-monophosphate (from uridine 5-triphosphate), a reaction catalyzed by the N-terminal domain. The chain is Bifunctional protein GlmU from Nocardia farcinica (strain IFM 10152).